We begin with the raw amino-acid sequence, 616 residues long: tRNA uridine 5-carboxymethylaminomethyl modification enzyme MnmG (616 aa).

FAD is bound by residues 10–15 (GAGHAG), valine 122, and serine 177. Residue 271–285 (GPRYCPSIEDKVVRF) coordinates NAD(+). FAD is bound at residue glutamine 368.

The protein belongs to the MnmG family. Homodimer. Heterotetramer of two MnmE and two MnmG subunits. The cofactor is FAD.

The protein resides in the cytoplasm. NAD-binding protein involved in the addition of a carboxymethylaminomethyl (cmnm) group at the wobble position (U34) of certain tRNAs, forming tRNA-cmnm(5)s(2)U34. This is tRNA uridine 5-carboxymethylaminomethyl modification enzyme MnmG from Malacoplasma penetrans (strain HF-2) (Mycoplasma penetrans).